The chain runs to 130 residues: Small ribosomal subunit protein uS9 (130 aa).

It belongs to the universal ribosomal protein uS9 family.

In Aeromonas salmonicida (strain A449), this protein is Small ribosomal subunit protein uS9.